The sequence spans 246 residues: UPF0309 protein TTE0306 (246 aa).

The SIS domain occupies 31-212; sequence ITESLISEDS…EAEIITNMLE (182 aa).

Belongs to the UPF0309 family.

This is UPF0309 protein TTE0306 from Caldanaerobacter subterraneus subsp. tengcongensis (strain DSM 15242 / JCM 11007 / NBRC 100824 / MB4) (Thermoanaerobacter tengcongensis).